A 154-amino-acid chain; its full sequence is UPF0225 protein YPDSF_0962 (154 aa).

It belongs to the UPF0225 family.

In Yersinia pestis (strain Pestoides F), this protein is UPF0225 protein YPDSF_0962.